The following is a 189-amino-acid chain: MDTEYEQVNKPWNELYKETMLGNKLMVNVGMEDQEVPLLPSNFLTKVRVGLSGGYITMRRFRIKIIPLVSRKAGVSGKLYLRDISDTKGQKLHCTESLDLGREIRLTMQHLDFSVSTRSGVPIVFGFEELVSPFLEGRELFSISVKWQFGLSKNCYSLPQSKWKVMYLEDALKVLKLSKKKASKTDSSV.

This sequence belongs to the tombusvirus/aureusvirus movement protein p22 family. As to quaternary structure, interacts with host protein HFI22. In terms of processing, phosphorylated.

It is found in the host membrane. In terms of biological role, transports viral genome to neighboring plant cells directly through plasmosdesmata, without any budding. The movement protein allows efficient cell to cell propagation, by bypassing the host cell wall barrier. The polypeptide is Movement protein (Tomato bushy stunt virus (strain BS-3) (TBSV)).